The chain runs to 265 residues: Aliphatic sulfonates import ATP-binding protein SsuB 1 (265 aa).

Positions 31–255 (FAFKGVEKRF…RRGSAELARL (225 aa)) constitute an ABC transporter domain. Residue 63–70 (GKSGCGKS) coordinates ATP.

The protein belongs to the ABC transporter superfamily. Aliphatic sulfonates importer (TC 3.A.1.17.2) family. As to quaternary structure, the complex is composed of two ATP-binding proteins (SsuB), two transmembrane proteins (SsuC) and a solute-binding protein (SsuA).

The protein resides in the cell inner membrane. It catalyses the reaction ATP + H2O + aliphatic sulfonate-[sulfonate-binding protein]Side 1 = ADP + phosphate + aliphatic sulfonateSide 2 + [sulfonate-binding protein]Side 1.. In terms of biological role, part of the ABC transporter complex SsuABC involved in aliphatic sulfonates import. Responsible for energy coupling to the transport system. The protein is Aliphatic sulfonates import ATP-binding protein SsuB 1 of Mesorhizobium japonicum (strain LMG 29417 / CECT 9101 / MAFF 303099) (Mesorhizobium loti (strain MAFF 303099)).